A 496-amino-acid chain; its full sequence is Coiled-coil domain-containing protein 77 (496 aa).

The segment at 1–42 is disordered; that stretch reads MDFSPPHGLRGGRSPSLQDTTISSSHTQKNGGDSTPLPPINE. A compositionally biased stretch (polar residues) spans 15-33; that stretch reads PSLQDTTISSSHTQKNGGD. The stretch at 51 to 113 forms a coiled coil; the sequence is RELLEYYRKK…KALSDMQVYL (63 aa). Residues 170-208 are disordered; sequence QRTVQSGDPFDRKVQRSGRAGVKQVPLKAPGKQDRTKAA. A coiled-coil region spans residues 214-495; that stretch reads QILLLQVEAL…IYGLENELRI (282 aa).

In Xenopus laevis (African clawed frog), this protein is Coiled-coil domain-containing protein 77 (ccdc77).